Consider the following 206-residue polypeptide: Cytochrome c oxidase assembly factor 8 (206 aa).

Residues 1-39 (MLPCAAGARGRGAMVVLRAGKKTFLPPLCRAFACRGCQL) constitute a mitochondrion transit peptide.

This sequence belongs to the COA8 family. N-terminal mitochondrial targeting sequence is cleaved from the mature protein once in the mitochondrion. Post-translationally, in normal conditions, the cytoplasmic precursor protein is rapidly degraded by the ubiquitination-proteasome system (UPS). Oxidative stress induces protein stabilization and import into mitochondria where it protects COX from degradation. Expressed in fibroblasts.

It is found in the mitochondrion inner membrane. In terms of biological role, required for cytochrome c complex (COX) IV assembly and function Protects COX assembly from oxidation-induced degradation, COX being the terminal component of the mitochondrial respiratory chain. This chain is Cytochrome c oxidase assembly factor 8, found in Homo sapiens (Human).